A 591-amino-acid chain; its full sequence is Cytidine monophosphate-N-acetylneuraminic acid hydroxylase (591 aa).

The region spanning 12–110 is the Rieske domain; it reads LEAEDVRNLK…AVLSETDGSL (99 aa). [2Fe-2S] cluster is bound by residues Cys-52, His-54, Cys-73, and His-76.

The protein belongs to the CMP-Neu5Ac hydroxylase family. Requires [2Fe-2S] cluster as cofactor.

The protein localises to the cytoplasm. It catalyses the reaction CMP-N-acetyl-beta-neuraminate + 2 Fe(II)-[cytochrome b5] + O2 + 2 H(+) = CMP-N-glycoloyl-beta-neuraminate + 2 Fe(III)-[cytochrome b5] + H2O. The protein operates within amino-sugar metabolism; N-acetylneuraminate metabolism. Its function is as follows. Sialic acids are components of carbohydrate chains of glycoconjugates and are involved in cell-cell recognition and cell-pathogen interactions. Catalyzes the conversion of CMP-N-acetylneuraminic acid (CMP-Neu5Ac) into its hydroxylated derivative CMP-N-glycolylneuraminic acid (CMP-Neu5Gc), a sialic acid abundantly expressed at the surface of many cells. This chain is Cytidine monophosphate-N-acetylneuraminic acid hydroxylase (cmah), found in Danio rerio (Zebrafish).